The chain runs to 400 residues: ATP phosphoribosyltransferase regulatory subunit (400 aa).

Belongs to the class-II aminoacyl-tRNA synthetase family. HisZ subfamily. In terms of assembly, heteromultimer composed of HisG and HisZ subunits.

It is found in the cytoplasm. It participates in amino-acid biosynthesis; L-histidine biosynthesis; L-histidine from 5-phospho-alpha-D-ribose 1-diphosphate: step 1/9. Its function is as follows. Required for the first step of histidine biosynthesis. May allow the feedback regulation of ATP phosphoribosyltransferase activity by histidine. This chain is ATP phosphoribosyltransferase regulatory subunit, found in Hahella chejuensis (strain KCTC 2396).